Consider the following 147-residue polypeptide: UPF0179 protein NP_3406A (147 aa).

This sequence belongs to the UPF0179 family.

The sequence is that of UPF0179 protein NP_3406A from Natronomonas pharaonis (strain ATCC 35678 / DSM 2160 / CIP 103997 / JCM 8858 / NBRC 14720 / NCIMB 2260 / Gabara) (Halobacterium pharaonis).